Here is a 506-residue protein sequence, read N- to C-terminus: Histidine ammonia-lyase (506 aa).

Positions 143–145 (ASG) form a cross-link, 5-imidazolinone (Ala-Gly). Residue Ser144 is modified to 2,3-didehydroalanine (Ser).

Belongs to the PAL/histidase family. In terms of processing, contains an active site 4-methylidene-imidazol-5-one (MIO), which is formed autocatalytically by cyclization and dehydration of residues Ala-Ser-Gly.

It localises to the cytoplasm. It catalyses the reaction L-histidine = trans-urocanate + NH4(+). Its pathway is amino-acid degradation; L-histidine degradation into L-glutamate; N-formimidoyl-L-glutamate from L-histidine: step 1/3. This is Histidine ammonia-lyase from Salmonella typhi.